Reading from the N-terminus, the 293-residue chain is Small ribosomal subunit protein uS5 (293 aa).

A disordered region spans residues 1-56 (MADDAGAAGGPGGPGGPGMGGRGGFRGGFGSGVRGRGRGRGRGRGRGRGARGGKAE). Alanine 2 carries the post-translational modification N-acetylalanine. Gly residues predominate over residues 7–34 (AAGGPGGPGGPGMGGRGGFRGGFGSGVR). Over residues 35 to 51 (GRGRGRGRGRGRGRGAR) the composition is skewed to basic residues. Residues lysine 54 and lysine 58 each participate in a glycyl lysine isopeptide (Lys-Gly) (interchain with G-Cter in ubiquitin) cross-link. The region spanning 102-165 (LKDEVLKIMP…ILAKLSIVPV (64 aa)) is the S5 DRBM domain. Threonine 252 carries the post-translational modification Phosphothreonine. An N6-acetyllysine modification is found at lysine 263. A Phosphoserine modification is found at serine 264. Threonine 270 bears the Phosphothreonine mark. An N6-acetyllysine; alternate modification is found at lysine 275. Lysine 275 is covalently cross-linked (Glycyl lysine isopeptide (Lys-Gly) (interchain with G-Cter in SUMO1); alternate). A Glycyl lysine isopeptide (Lys-Gly) (interchain with G-Cter in SUMO2); alternate cross-link involves residue lysine 275. A Glycyl lysine isopeptide (Lys-Gly) (interchain with G-Cter in ubiquitin); alternate cross-link involves residue lysine 275. Serine 281 carries the post-translational modification Phosphoserine.

It belongs to the universal ribosomal protein uS5 family. Component of the small ribosomal subunit. Interacts with zinc finger protein ZNF277 (via zinc-finger domains); the interaction is direct; the interaction is extra-ribosomal. Interaction with ZNF277 competes with the binding of RPS2 to protein arginine methyltransferase PRMT3. Citrullinated by PADI4 in the Arg/Gly-rich region. Post-translationally, asymmetric arginine dimethylation by PRMT3 occurs at multiple sites in the Arg/Gly-rich region. In terms of processing, monoubiquitinated at Lys-54 and Lys-58 by RNF10 when a ribosome has stalled during translation, leading to its degradation by the proteasome. Deubiquitinated at Lys-54 and Lys-58 by USP10, preventing degradation by the proteasome and promoting 40S ribosome subunit recycling following ribosome dissociation.

Its subcellular location is the cytoplasm. It localises to the nucleus. It is found in the nucleolus. Its function is as follows. Component of the ribosome, a large ribonucleoprotein complex responsible for the synthesis of proteins in the cell. The small ribosomal subunit (SSU) binds messenger RNAs (mRNAs) and translates the encoded message by selecting cognate aminoacyl-transfer RNA (tRNA) molecules. The large subunit (LSU) contains the ribosomal catalytic site termed the peptidyl transferase center (PTC), which catalyzes the formation of peptide bonds, thereby polymerizing the amino acids delivered by tRNAs into a polypeptide chain. The nascent polypeptides leave the ribosome through a tunnel in the LSU and interact with protein factors that function in enzymatic processing, targeting, and the membrane insertion of nascent chains at the exit of the ribosomal tunnel. Plays a role in the assembly and function of the 40S ribosomal subunit. Mutations in this protein affects the control of translational fidelity. Involved in nucleolar processing of pre-18S ribosomal RNA and ribosome assembly. This Bos taurus (Bovine) protein is Small ribosomal subunit protein uS5 (RPS2).